A 217-amino-acid polypeptide reads, in one-letter code: Thiamine-phosphate synthase (217 aa).

4-amino-2-methyl-5-(diphosphooxymethyl)pyrimidine contacts are provided by residues 37 to 41 and Asn72; that span reads QFREK. Mg(2+)-binding residues include Asp73 and Asp92. Residue Ser110 participates in 4-amino-2-methyl-5-(diphosphooxymethyl)pyrimidine binding. 136–138 is a binding site for 2-[(2R,5Z)-2-carboxy-4-methylthiazol-5(2H)-ylidene]ethyl phosphate; sequence TVS. Lys139 contributes to the 4-amino-2-methyl-5-(diphosphooxymethyl)pyrimidine binding site. Residues Gly168 and 188–189 contribute to the 2-[(2R,5Z)-2-carboxy-4-methylthiazol-5(2H)-ylidene]ethyl phosphate site; that span reads IS.

It belongs to the thiamine-phosphate synthase family. Mg(2+) serves as cofactor.

It catalyses the reaction 2-[(2R,5Z)-2-carboxy-4-methylthiazol-5(2H)-ylidene]ethyl phosphate + 4-amino-2-methyl-5-(diphosphooxymethyl)pyrimidine + 2 H(+) = thiamine phosphate + CO2 + diphosphate. It carries out the reaction 2-(2-carboxy-4-methylthiazol-5-yl)ethyl phosphate + 4-amino-2-methyl-5-(diphosphooxymethyl)pyrimidine + 2 H(+) = thiamine phosphate + CO2 + diphosphate. The catalysed reaction is 4-methyl-5-(2-phosphooxyethyl)-thiazole + 4-amino-2-methyl-5-(diphosphooxymethyl)pyrimidine + H(+) = thiamine phosphate + diphosphate. The protein operates within cofactor biosynthesis; thiamine diphosphate biosynthesis; thiamine phosphate from 4-amino-2-methyl-5-diphosphomethylpyrimidine and 4-methyl-5-(2-phosphoethyl)-thiazole: step 1/1. Condenses 4-methyl-5-(beta-hydroxyethyl)thiazole monophosphate (THZ-P) and 2-methyl-4-amino-5-hydroxymethyl pyrimidine pyrophosphate (HMP-PP) to form thiamine monophosphate (TMP). The sequence is that of Thiamine-phosphate synthase from Anoxybacillus flavithermus (strain DSM 21510 / WK1).